Consider the following 66-residue polypeptide: UPF0337 protein bsl1473 (66 aa).

Belongs to the UPF0337 (CsbD) family.

In Bradyrhizobium diazoefficiens (strain JCM 10833 / BCRC 13528 / IAM 13628 / NBRC 14792 / USDA 110), this protein is UPF0337 protein bsl1473.